The following is a 466-amino-acid chain: Gamma-glutamylpolyamine synthetase GlnA3 (466 aa).

A GS catalytic domain is found at Gly-127–Tyr-466. Mg(2+)-binding residues include Glu-151 and Glu-153. Residue Glu-202 participates in ATP binding. Positions 207 and 214 each coordinate Mg(2+). Gly-259 contacts L-glutamate. A Mg(2+)-binding site is contributed by His-263. Ser-267 is an ATP binding site. Residues Arg-316 and Arg-334 each coordinate L-glutamate. ATP-binding residues include Arg-334 and Arg-339. Glu-355 serves as a coordination point for Mg(2+).

Belongs to the glutamine synthetase family. Mg(2+) serves as cofactor. Expressed in mycelium.

It carries out the reaction spermine + L-glutamate + ATP = gamma-L-glutamylspermine + ADP + phosphate + H(+). The catalysed reaction is spermidine + L-glutamate + ATP = gamma-L-glutamylspermidine + ADP + phosphate + H(+). The enzyme catalyses putrescine + L-glutamate + ATP = gamma-L-glutamylputrescine + ADP + phosphate + H(+). It catalyses the reaction cadaverine + L-glutamate + ATP = gamma-L-glutamylcadaverine + ADP + phosphate + H(+). Its pathway is amine and polyamine degradation; putrescine degradation. It functions in the pathway amine and polyamine degradation; spermidine degradation. The protein operates within amine and polyamine degradation; spermine degradation. In terms of biological role, involved in the catabolism of polyamines. Catalyzes the ATP-dependent gamma-glutamylation of polyamines. Substrates include putrescine, cadaverine, spermidine and spermine, with a preference for long-chain polyamines spermidine and spermine. Is not able to compensate for the loss of glutamine synthetases (GSs). No complementation of the L-glutamine auxotrophy of an E.coli glnA mutant. Involved in morphological differentiation and in the production of secondary metabolites. Together with GlnA2, enables survival of S.coelicolor under exposure to high local environmental polyamine concentrations, which is toxic to the cells. The sequence is that of Gamma-glutamylpolyamine synthetase GlnA3 from Streptomyces coelicolor (strain ATCC BAA-471 / A3(2) / M145).